Consider the following 251-residue polypeptide: Probable transcriptional regulatory protein jk1057 (251 aa).

The interval 1–22 is disordered; sequence MAGHSKWATTKHKKAANDAKRG.

Belongs to the TACO1 family.

The protein resides in the cytoplasm. The protein is Probable transcriptional regulatory protein jk1057 of Corynebacterium jeikeium (strain K411).